A 319-amino-acid polypeptide reads, in one-letter code: Thioredoxin reductase (319 aa).

FAD-binding positions include 11–14, 40–41, Gln-45, Asn-54, Val-87, Cys-145, Asp-288, and 295–297; these read SGPA, IA, and RQA. Cysteines 142 and 145 form a disulfide.

This sequence belongs to the class-II pyridine nucleotide-disulfide oxidoreductase family. As to quaternary structure, homodimer. FAD serves as cofactor.

It localises to the cytoplasm. The catalysed reaction is [thioredoxin]-dithiol + NADP(+) = [thioredoxin]-disulfide + NADPH + H(+). This Yarrowia lipolytica (strain CLIB 122 / E 150) (Yeast) protein is Thioredoxin reductase (TRR1).